The primary structure comprises 370 residues: ECF RNA polymerase sigma factor SigG (370 aa).

The interval 63–129 (EPYRRELLAH…LTALEGRRRR (67 aa)) is sigma-70 factor domain-2. The Polymerase core binding signature appears at 85 to 88 (DLVQ). The interval 180–232 (LAFVAALQHLSPRQRAVLLLRDVLQWKSAEVADAIGTSTVAVNSLLQRARSQL) is sigma-70 factor domain-4. The H-T-H motif DNA-binding region spans 207 to 226 (SAEVADAIGTSTVAVNSLLQ).

This sequence belongs to the sigma-70 factor family. ECF subfamily. As to quaternary structure, interacts transiently with the RNA polymerase catalytic core formed by RpoA, RpoB, RpoC and RpoZ (2 alpha, 1 beta, 1 beta' and 1 omega subunit) to form the RNA polymerase holoenzyme that can initiate transcription.

Its function is as follows. Sigma factors are initiation factors that promote the attachment of RNA polymerase to specific initiation sites and are then released. Extracytoplasmic function (ECF) sigma factors are held in an inactive form by a cognate anti-sigma factor until released, although no anti-sigma factor is known for this protein. May be involved in host intracellular survival after infection (strains H37Rv and CDC 1551). A role in the SOS response is controversial; it has been seen in strain CDC 1551 but not in H37Rv. The polypeptide is ECF RNA polymerase sigma factor SigG (sigG) (Mycobacterium tuberculosis (strain CDC 1551 / Oshkosh)).